A 187-amino-acid chain; its full sequence is Holliday junction branch migration complex subunit RuvA (187 aa).

The segment at 1–64 (MIEYIRGIIE…EDGFQIFGFK (64 aa)) is domain I. Residues 65 to 136 (RKEELELFEK…ELKDKVPKEV (72 aa)) are domain II. The segment at 136–139 (VVVP) is flexible linker. The interval 140 to 187 (KEDSLLNEALEALLALGYTKSEAIYALSDVNCESVEQAVKEALKKLAK) is domain III.

The protein belongs to the RuvA family. In terms of assembly, homotetramer. Forms an RuvA(8)-RuvB(12)-Holliday junction (HJ) complex. HJ DNA is sandwiched between 2 RuvA tetramers; dsDNA enters through RuvA and exits via RuvB. An RuvB hexamer assembles on each DNA strand where it exits the tetramer. Each RuvB hexamer is contacted by two RuvA subunits (via domain III) on 2 adjacent RuvB subunits; this complex drives branch migration. In the full resolvosome a probable DNA-RuvA(4)-RuvB(12)-RuvC(2) complex forms which resolves the HJ.

It localises to the cytoplasm. The RuvA-RuvB-RuvC complex processes Holliday junction (HJ) DNA during genetic recombination and DNA repair, while the RuvA-RuvB complex plays an important role in the rescue of blocked DNA replication forks via replication fork reversal (RFR). RuvA specifically binds to HJ cruciform DNA, conferring on it an open structure. The RuvB hexamer acts as an ATP-dependent pump, pulling dsDNA into and through the RuvAB complex. HJ branch migration allows RuvC to scan DNA until it finds its consensus sequence, where it cleaves and resolves the cruciform DNA. The chain is Holliday junction branch migration complex subunit RuvA from Caldanaerobacter subterraneus subsp. tengcongensis (strain DSM 15242 / JCM 11007 / NBRC 100824 / MB4) (Thermoanaerobacter tengcongensis).